A 487-amino-acid chain; its full sequence is MKPSTEWWRYLAPLAVIAIIALIPVPAGLESHTWLYFAVFTGVIVGLILEPVPGAVVAMVGISIIAILSPWLLFSPEQLAQPGFKFTAKSLSWAVFGFSNSVIWLIFAAFMFGTGYEKTGLGRRIALILVKKMGHRTLFLGYAVMFSELILAPVTPSNSARGAGIIYPIIRNLPPLYQSQPNDSSSRSIGSYIMWMGIVADCVTSAIFLTAMAPNLLLIGLMKSASHATLSWGDWFLGMLPLSILLVLLVPWLAYVLYPPVLKSGDQVPRWAETELQAMGPLCSREKRMLGLMVGALVLWIFGGDYIDAAMVGYSVVALMLLLRIISWDDIVSNKAAWNVFFWLASLITLATGLNNTGFISWFGKLLAGSLSGYSPTMVMVALIVVFYLLRYFFASATAYTSALAPMMIAAALAMPEIPLPVFCLMVGAAIGLGSILTPYATGPSPIYYGSGYLPTADYWRLGAIFGLIFLVLLVITGLLWMPVVLL.

Transmembrane regions (helical) follow at residues 10-30 (YLAP…AGLE), 33-53 (TWLY…EPVP), 54-74 (GAVV…WLLF), 93-113 (WAVF…FMFG), 137-157 (TLFL…VTPS), 189-209 (IGSY…AIFL), 236-256 (FLGM…LAYV), 292-312 (LMVG…AAMV), 313-333 (GYSV…DIVS), 340-360 (VFFW…TGFI), 370-390 (SLSG…FYLL), 393-413 (FFAS…AAAL), 418-438 (IPLP…SILT), and 465-485 (IFGL…MPVV).

This sequence belongs to the SLC13A/DASS transporter (TC 2.A.47) family. DIT1 subfamily.

It localises to the cell inner membrane. The enzyme catalyses (2R,3R)-tartrate(out) + succinate(in) = (2R,3R)-tartrate(in) + succinate(out). Its function is as follows. Catalyzes the uptake of tartrate in exchange for intracellular succinate. Essential for anaerobic L-tartrate fermentation. The chain is L-tartrate/succinate antiporter (ttdT) from Shigella boydii serotype 4 (strain Sb227).